The following is an 85-amino-acid chain: UPF0335 protein WP0746 (85 aa).

This sequence belongs to the UPF0335 family.

This Wolbachia pipientis subsp. Culex pipiens (strain wPip) protein is UPF0335 protein WP0746.